The primary structure comprises 266 residues: 3-deoxy-manno-octulosonate cytidylyltransferase (266 aa).

It belongs to the KdsB family.

It is found in the cytoplasm. The enzyme catalyses 3-deoxy-alpha-D-manno-oct-2-ulosonate + CTP = CMP-3-deoxy-beta-D-manno-octulosonate + diphosphate. It functions in the pathway nucleotide-sugar biosynthesis; CMP-3-deoxy-D-manno-octulosonate biosynthesis; CMP-3-deoxy-D-manno-octulosonate from 3-deoxy-D-manno-octulosonate and CTP: step 1/1. It participates in bacterial outer membrane biogenesis; lipopolysaccharide biosynthesis. Activates KDO (a required 8-carbon sugar) for incorporation into bacterial lipopolysaccharide in Gram-negative bacteria. The polypeptide is 3-deoxy-manno-octulosonate cytidylyltransferase (Paraburkholderia xenovorans (strain LB400)).